The chain runs to 222 residues: UPF0488 protein C8orf33 homolog (222 aa).

The segment covering 1 to 16 has biased composition (low complexity); it reads MAEPGRPAREAPAASS. 3 disordered regions span residues 1–103, 119–146, and 186–210; these read MAEP…AEQL, KTQRPTPKQKEQAVGAIRTLRSEKTPLP, and VSEATRKKSGRVCRPRPAERAKTTP. N-acetylalanine is present on Ala2. Basic residues predominate over residues 17 to 28; it reads RKTHRAPRRPRP. Position 27 is an omega-N-methylarginine (Arg27). The segment covering 29 to 39 has biased composition (low complexity); sequence SRSASGASEPP. Ser75 bears the Phosphoserine mark. Positions 93 to 103 are enriched in low complexity; it reads PPSAEAQAEQL.

Belongs to the UPF0488 family.

The polypeptide is UPF0488 protein C8orf33 homolog (Mus musculus (Mouse)).